The following is a 144-amino-acid chain: Large ribosomal subunit protein uL22 (144 aa).

A disordered region spans residues 1–38; sequence MAETQTTKKGAKRVRQPVPARRSKPNRPAKAAPGPHAS. Over residues 9-27 the composition is skewed to basic residues; that stretch reads KGAKRVRQPVPARRSKPNR.

The protein belongs to the universal ribosomal protein uL22 family. In terms of assembly, part of the 50S ribosomal subunit.

This protein binds specifically to 23S rRNA; its binding is stimulated by other ribosomal proteins, e.g. L4, L17, and L20. It is important during the early stages of 50S assembly. It makes multiple contacts with different domains of the 23S rRNA in the assembled 50S subunit and ribosome. In terms of biological role, the globular domain of the protein is located near the polypeptide exit tunnel on the outside of the subunit, while an extended beta-hairpin is found that lines the wall of the exit tunnel in the center of the 70S ribosome. The sequence is that of Large ribosomal subunit protein uL22 from Anaeromyxobacter sp. (strain Fw109-5).